Reading from the N-terminus, the 212-residue chain is RNA chaperone ProQ (212 aa).

The tract at residues 114–149 is disordered; it reads RIAKAGKTSAPAANAKKPVKKPVARRPKAAPSAKPV. The segment covering 118-129 has biased composition (low complexity); it reads AGKTSAPAANAK. Residues 130-141 are compositionally biased toward basic residues; the sequence is KPVKKPVARRPK.

Belongs to the ProQ family.

The protein resides in the cytoplasm. Functionally, RNA chaperone with significant RNA binding, RNA strand exchange and RNA duplexing activities. This Shewanella piezotolerans (strain WP3 / JCM 13877) protein is RNA chaperone ProQ.